A 66-amino-acid polypeptide reads, in one-letter code: Surface composition regulator (66 aa).

Belongs to the GlgS family.

Major determinant of cell surface composition. Negatively regulates motility, adhesion and synthesis of biofilm exopolysaccharides. This Shigella dysenteriae serotype 1 (strain Sd197) protein is Surface composition regulator.